The following is a 302-amino-acid chain: 4-hydroxy-tetrahydrodipicolinate synthase (302 aa).

Thr57 serves as a coordination point for pyruvate. The active-site Proton donor/acceptor is the Tyr145. The Schiff-base intermediate with substrate role is filled by Lys173. Ile213 contributes to the pyruvate binding site.

The protein belongs to the DapA family. In terms of assembly, homotetramer; dimer of dimers.

Its subcellular location is the cytoplasm. It carries out the reaction L-aspartate 4-semialdehyde + pyruvate = (2S,4S)-4-hydroxy-2,3,4,5-tetrahydrodipicolinate + H2O + H(+). It functions in the pathway amino-acid biosynthesis; L-lysine biosynthesis via DAP pathway; (S)-tetrahydrodipicolinate from L-aspartate: step 3/4. Its function is as follows. Catalyzes the condensation of (S)-aspartate-beta-semialdehyde [(S)-ASA] and pyruvate to 4-hydroxy-tetrahydrodipicolinate (HTPA). In Corynebacterium aurimucosum (strain ATCC 700975 / DSM 44827 / CIP 107346 / CN-1) (Corynebacterium nigricans), this protein is 4-hydroxy-tetrahydrodipicolinate synthase.